The sequence spans 65 residues: Pancreatic polypeptide prohormone (65 aa).

Tyr36 bears the Tyrosine amide mark. The propeptide occupies 59–65 (ELSPMGA).

This sequence belongs to the NPY family.

Its subcellular location is the secreted. Functionally, hormone secreted by pancreatic cells that acts as a regulator of pancreatic and gastrointestinal functions probably by signaling through the G protein-coupled receptor NPY4R2. This chain is Pancreatic polypeptide prohormone (PPY), found in Sus scrofa (Pig).